The sequence spans 591 residues: Probable translation initiation factor IF-2 (591 aa).

A tr-type G domain is found at 7-223; that stretch reads LRTPIVCVMG…LLGLAQKFLE (217 aa). A G1 region spans residues 16–23; sequence GHVDHGKT. Residue 16–23 coordinates GTP; that stretch reads GHVDHGKT. The tract at residues 41-45 is G2; that stretch reads AITQH. Residues 78-81 form a G3 region; the sequence is DTPG. Residues 78–82 and 132–135 contribute to the GTP site; these read DTPGH and NKID. Residues 132–135 form a G4 region; sequence NKID. The interval 200-202 is G5; the sequence is SAF.

This sequence belongs to the TRAFAC class translation factor GTPase superfamily. Classic translation factor GTPase family. IF-2 subfamily.

Function in general translation initiation by promoting the binding of the formylmethionine-tRNA to ribosomes. Seems to function along with eIF-2. The sequence is that of Probable translation initiation factor IF-2 from Methanosarcina mazei (strain ATCC BAA-159 / DSM 3647 / Goe1 / Go1 / JCM 11833 / OCM 88) (Methanosarcina frisia).